The following is a 122-amino-acid chain: Large ribosomal subunit protein bL12 (122 aa).

The protein belongs to the bacterial ribosomal protein bL12 family. As to quaternary structure, homodimer. Part of the ribosomal stalk of the 50S ribosomal subunit. Forms a multimeric L10(L12)X complex, where L10 forms an elongated spine to which 2 to 4 L12 dimers bind in a sequential fashion. Binds GTP-bound translation factors.

Its function is as follows. Forms part of the ribosomal stalk which helps the ribosome interact with GTP-bound translation factors. Is thus essential for accurate translation. This chain is Large ribosomal subunit protein bL12, found in Streptococcus thermophilus (strain ATCC BAA-491 / LMD-9).